We begin with the raw amino-acid sequence, 164 residues long: Pheromone-binding protein 2 (164 aa).

An N-terminal signal peptide occupies residues 1 to 22; the sequence is MIRKVLLSVLLAVLMTINLGQA. Cystine bridges form between Cys41–Cys76, Cys72–Cys130, and Cys119–Cys139.

The protein belongs to the PBP/GOBP family. Antenna.

Its function is as follows. This major soluble protein in olfactory sensilla of male moths might serve to solubilize the extremely hydrophobic pheromone molecules and to transport pheromone through the aqueous lymph to receptors located on olfactory cilia. This is Pheromone-binding protein 2 from Antheraea pernyi (Chinese oak silk moth).